The following is a 372-amino-acid chain: Queuine tRNA-ribosyltransferase (372 aa).

The Proton acceptor role is filled by Asp-90. Substrate-binding positions include 90–94 (DSGGF), Asp-144, Gln-193, and Gly-220. The RNA binding stretch occupies residues 251–257 (GVGTPED). Catalysis depends on Asp-270, which acts as the Nucleophile. Residues 275–279 (TRNAR) are RNA binding; important for wobble base 34 recognition. 4 residues coordinate Zn(2+): Cys-308, Cys-310, Cys-313, and His-339.

It belongs to the queuine tRNA-ribosyltransferase family. In terms of assembly, homodimer. Within each dimer, one monomer is responsible for RNA recognition and catalysis, while the other monomer binds to the replacement base PreQ1. The cofactor is Zn(2+).

The enzyme catalyses 7-aminomethyl-7-carbaguanine + guanosine(34) in tRNA = 7-aminomethyl-7-carbaguanosine(34) in tRNA + guanine. The protein operates within tRNA modification; tRNA-queuosine biosynthesis. Functionally, catalyzes the base-exchange of a guanine (G) residue with the queuine precursor 7-aminomethyl-7-deazaguanine (PreQ1) at position 34 (anticodon wobble position) in tRNAs with GU(N) anticodons (tRNA-Asp, -Asn, -His and -Tyr). Catalysis occurs through a double-displacement mechanism. The nucleophile active site attacks the C1' of nucleotide 34 to detach the guanine base from the RNA, forming a covalent enzyme-RNA intermediate. The proton acceptor active site deprotonates the incoming PreQ1, allowing a nucleophilic attack on the C1' of the ribose to form the product. After dissociation, two additional enzymatic reactions on the tRNA convert PreQ1 to queuine (Q), resulting in the hypermodified nucleoside queuosine (7-(((4,5-cis-dihydroxy-2-cyclopenten-1-yl)amino)methyl)-7-deazaguanosine). This Sulfurimonas denitrificans (strain ATCC 33889 / DSM 1251) (Thiomicrospira denitrificans (strain ATCC 33889 / DSM 1251)) protein is Queuine tRNA-ribosyltransferase.